The primary structure comprises 178 residues: uncharacterized protein (178 aa).

This is an uncharacterized protein from Sinorhizobium fredii (strain NBRC 101917 / NGR234).